The chain runs to 143 residues: Mini-ribonuclease 3 (143 aa).

D23 is an active-site residue.

This sequence belongs to the MrnC RNase family. In terms of assembly, homodimer. Mg(2+) is required as a cofactor.

It localises to the cytoplasm. In terms of biological role, involved in correct processing of both the 5' and 3' ends of 23S rRNA precursor. Processes 30S rRNA precursor transcript even in absence of ribonuclease 3 (Rnc); Rnc processes 30S rRNA into smaller rRNA precursors. Cleaves more efficiently on assembled 50S ribosomal subunits. Cleavage is strongly stimulated by ribosomal protein L3 (RplC); 20-30% DMSO can replace RplC, suggesting RplC may alter rRNA conformation. This is Mini-ribonuclease 3 (mrnC) from Bacillus subtilis (strain 168).